The primary structure comprises 303 residues: L(+)-tartrate dehydratase subunit alpha (303 aa).

Positions 71, 190, and 277 each coordinate iron-sulfur cluster.

It belongs to the class-I fumarase family. In terms of assembly, tetramer of two alpha and two beta subunits. It depends on iron-sulfur cluster as a cofactor.

It catalyses the reaction (2R,3R)-tartrate = oxaloacetate + H2O. This is L(+)-tartrate dehydratase subunit alpha (ttdA) from Escherichia coli O6:H1 (strain CFT073 / ATCC 700928 / UPEC).